Consider the following 1529-residue polypeptide: ABC multidrug transporter AFR2 (1529 aa).

Residues 1–10 show a composition bias toward gly residues; the sequence is MAFAGVGQGL. A disordered region spans residues 1-21; that stretch reads MAFAGVGQGLGTYDRTEQTSG. Residues 144–394 form the ABC transporter 1 domain; that stretch reads GALRDLISNR…FVDMGFHCPS (251 aa). N-linked (GlcNAc...) asparagine glycosylation is found at Asn235 and Asn318. 5 consecutive transmembrane segments (helical) span residues 505 to 525, 539 to 559, 589 to 609, 614 to 634, and 648 to 668; these read LTLT…SVFY, ALLF…ILIL, IPYK…MTNL, GPYF…SMLF, and LAPA…AVNV. N-linked (GlcNAc...) asparagine glycosylation is present at Asn742. A helical membrane pass occupies residues 757–777; the sequence is GILIGFFLFFTAIYMTATEFI. An ABC transporter 2 domain is found at 845–1087; sequence FSWKDVVYDI…ILIDYFEKNG (243 aa). ATP is bound at residue 881–888; it reads GVSGAGKT. A run of 5 helical transmembrane segments spans residues 1193–1213, 1227–1247, 1268–1288, 1314–1334, and 1353–1373; these read YIWS…FSFF, FSVF…MPNF, IFIL…GAVI, LMFL…IMIV, and MCLI…FWMF. Asn1434 is a glycosylation site (N-linked (GlcNAc...) asparagine). Residues 1465 to 1485 form a helical membrane-spanning segment; that stretch reads FGLLWAYVVFNIIAAVGIYWL. The interval 1493-1529 is disordered; it reads GKEQASEPEGVQEKLVPAQSSEKKRESVSRGSESTAA.

This sequence belongs to the ABC transporter superfamily. ABCG family. PDR (TC 3.A.1.205) subfamily.

The protein localises to the cell membrane. It carries out the reaction itraconazole(in) + ATP + H2O = itraconazole(out) + ADP + phosphate + H(+). It catalyses the reaction voriconazole(in) + ATP + H2O = voriconazole(out) + ADP + phosphate + H(+). The catalysed reaction is fluconazole(in) + ATP + H2O = fluconazole(out) + ADP + phosphate + H(+). Pleiotropic ABC efflux transporter that confers resistance to structurally and functionally unrelated compounds including azoles such as fluconazole (FLC), itraconazole (ITC), posaconazole (POS), and voriconazole (VRC). This chain is ABC multidrug transporter AFR2, found in Cryptococcus neoformans var. grubii serotype A (strain H99 / ATCC 208821 / CBS 10515 / FGSC 9487) (Filobasidiella neoformans var. grubii).